Consider the following 342-residue polypeptide: Nucleoid-associated protein Sfri_2491 (342 aa).

The protein belongs to the YejK family.

It is found in the cytoplasm. Its subcellular location is the nucleoid. This is Nucleoid-associated protein Sfri_2491 from Shewanella frigidimarina (strain NCIMB 400).